The sequence spans 170 residues: uncharacterized protein (170 aa).

The chain crosses the membrane as a helical span at residues 7-27 (LVELLIGLAIISIALNFAVPL).

The protein resides in the membrane. This is an uncharacterized protein from Haemophilus influenzae (strain ATCC 51907 / DSM 11121 / KW20 / Rd).